The sequence spans 187 residues: MEPGVQDLGLSSSEDESPSLAIRSPTLRKPLKHSTPEEAALGWSPRPSGGASYLSGSPMPAHFSQDLASHPAGVSPPATVRKRRLSTLWASKESSLDLSAPGEEPPTSASLTQRQRQRQQQQQQQESLRAKSWAQNPGLPGILNTTGRKRRDPKKRAAAMERVRQWEIYVLQNIEEATQHELTIEDD.

Disordered regions lie at residues 1–79 and 92–159; these read MEPG…PPAT and KESS…RAAA. Positions 111–131 form a coiled coil; it reads LTQRQRQRQQQQQQQESLRAK. Residues 147–157 are compositionally biased toward basic residues; it reads GRKRRDPKKRA.

This chain is Coiled-coil domain-containing protein 201, found in Homo sapiens (Human).